A 194-amino-acid chain; its full sequence is E3 ubiquitin-protein ligase RNF4 (194 aa).

Residues 1–12 show a composition bias toward basic residues; that stretch reads MSTRNPQRKRRG. The tract at residues 1-20 is required for ubiquitination activity; sequence MSTRNPQRKRRGGAVNSRQT. Positions 1-36 are disordered; sequence MSTRNPQRKRRGGAVNSRQTQKRTRETTSTPEISLE. Residues 6–65 form a mediates interaction with TRPS1 region; it reads PQRKRRGGAVNSRQTQKRTRETTSTPEISLEAEPIELVETVGDEIVDLTCESLEPVVVDL. 4 short sequence motifs (SUMO interaction motif) span residues 40–43, 50–53, 61–63, and 71–74; these read IELV, IVDL, VVV, and VVIV. 2 positions are modified to phosphoserine: Ser-98 and Ser-99. Cys-136, Cys-139, Cys-158, His-160, Cys-163, Cys-166, Cys-177, and Cys-180 together coordinate Zn(2+). The RING-type zinc-finger motif lies at 136–181; it reads CPICMDGYSEIVQNGRLIVSTECGHVFCSQCLRDSLKNANTCPTCR.

Homodimer (via RING-type zinc finger domain). Interacts with GSC2. Interacts with AR/the androgen receptor and TBP. Interacts with TCF20. Interacts with PATZ1. Interacts with TRPS1; negatively regulates TRPS1 transcriptional repressor activity. Interacts with PML (isoform PML-1, isoform PML-2, isoform PML-3, isoform PML-4, isoform PML-5 and isoform PML-6). Interacts with PRDM1/Blimp-1. Post-translationally, sumoylated; conjugated by one or two SUMO1 moieties. In terms of processing, autoubiquitinated. As to expression, widely expressed with highest levels in testis.

Its subcellular location is the cytoplasm. The protein localises to the nucleus. The protein resides in the nucleoplasm. It is found in the PML body. The catalysed reaction is S-ubiquitinyl-[E2 ubiquitin-conjugating enzyme]-L-cysteine + [acceptor protein]-L-lysine = [E2 ubiquitin-conjugating enzyme]-L-cysteine + N(6)-ubiquitinyl-[acceptor protein]-L-lysine.. It participates in protein modification; protein ubiquitination. E3 ubiquitin-protein ligase which binds polysumoylated chains covalently attached to proteins and mediates 'Lys-6'-, 'Lys-11'-, 'Lys-48'- and 'Lys-63'-linked polyubiquitination of those substrates and their subsequent targeting to the proteasome for degradation. Regulates the degradation of several proteins including PML and the transcriptional activator PEA3. Involved in chromosome alignment and spindle assembly, it regulates the kinetochore CENPH-CENPI-CENPK complex by targeting polysumoylated CENPI to proteasomal degradation. Regulates the cellular responses to hypoxia and heat shock through degradation of respectively EPAS1 and PARP1. Alternatively, it may also bind DNA/nucleosomes and have a more direct role in the regulation of transcription for instance enhancing basal transcription and steroid receptor-mediated transcriptional activation. Catalyzes ubiquitination of sumoylated PARP1 in response to PARP1 trapping to chromatin, leading to PARP1 removal from chromatin by VCP/p97. This Rattus norvegicus (Rat) protein is E3 ubiquitin-protein ligase RNF4.